Here is a 471-residue protein sequence, read N- to C-terminus: MNYDSQQPPLPPLPYAGCRRASGFPALGRGGTVPVGVWGGAGQGREGRSWGEGPRGPGLGRRDLSSADPAVLGATMESRCYGCAVKFTLFKKEYGCKNCGRAFCSGCLSFSAAVPRTGNTQQKVCKQCHEVLTRGSSANASKWSPPQNYKKRVAALEAKQKPSTSQSQGLTRQDQMIAERLARLRQENKPKLVPSQAEIEARLAALKDERQGSIPSTQEMEARLAALQGRVLPSQTPQPAHHTPDTRTQAQQTQDLLTQLAAEVAIDESWKGGGPAASLQNDLNQGGPGSTNSKRQANWSLEEEKSRLLAEAALELREENTRQERILALAKRLAMLRGQDPERVTLQDYRLPDSDDDEDEETAIQRVLQQLTEEASLDEASGFNIPAEQASRPWTQPRGAEPEAQDVDPRPEAEEEELPWCCICNEDATLRCAGCDGDLFCARCFREGHDAFELKEHQTSAYSPPRAGQEH.

The tract at residues 39-64 is disordered; that stretch reads GGAGQGREGRSWGEGPRGPGLGRRDL. The segment at 74 to 133 adopts an FYVE-type zinc-finger fold; it reads ATMESRCYGCAVKFTLFKKEYGCKNCGRAFCSGCLSFSAAVPRTGNTQQKVCKQCHEVLT. Cysteine 80, cysteine 83, cysteine 96, cysteine 99, cysteine 104, cysteine 107, cysteine 125, and cysteine 128 together coordinate Zn(2+). Position 144 is a phosphoserine (serine 144). Residues 174-187 carry the MIM1-A motif; that stretch reads DQMIAERLARLRQE. A Glycyl lysine isopeptide (Lys-Gly) (interchain with G-Cter in SUMO2) cross-link involves residue lysine 207. Threonine 243 is modified (phosphothreonine). Residues 271-299 form a disordered region; the sequence is KGGGPAASLQNDLNQGGPGSTNSKRQANW. The span at 278 to 299 shows a compositional bias: polar residues; that stretch reads SLQNDLNQGGPGSTNSKRQANW. Glycine 286 and serine 293 each carry phosphoserine. Residues 311–375 are a coiled coil; it reads EAALELREEN…RVLQQLTEEA (65 aa). Positions 326–339 match the MIM1-B motif; it reads ILALAKRLAMLRGQ. Serine 354 bears the Phosphoserine mark. Residues 386-412 form a disordered region; that stretch reads PAEQASRPWTQPRGAEPEAQDVDPRPE. Serine 463 is subject to Phosphoserine.

In terms of assembly, interacts (via MIM1-B) with VPS4A; interaction takes place at the midbody ring following cytokinesis checkpoint activation. Post-translationally, phosphorylated in vitro at Ser-22 by AURKB; however, phosphorylation at this site could not be confirmed in vivo. Detected in brain, heart, skeletal muscle and kidney. Expressed in the liver (at protein level).

The protein resides in the cytoplasm. It is found in the cytoskeleton. The protein localises to the microtubule organizing center. It localises to the centrosome. Its subcellular location is the cleavage furrow. The protein resides in the midbody. It is found in the midbody ring. Key regulator of abscission step in cytokinesis: part of the cytokinesis checkpoint, a process required to delay abscission to prevent both premature resolution of intercellular chromosome bridges and accumulation of DNA damage. Together with CHMP4C, required to retain abscission-competent VPS4 (VPS4A and/or VPS4B) at the midbody ring until abscission checkpoint signaling is terminated at late cytokinesis. Deactivation of AURKB results in dephosphorylation of CHMP4C followed by its dissociation from ZFYVE19/ANCHR and VPS4 and subsequent abscission. The chain is Abscission/NoCut checkpoint regulator (ZFYVE19) from Homo sapiens (Human).